The primary structure comprises 549 residues: Glucose-6-phosphate isomerase (549 aa).

The Proton donor role is filled by glutamate 355. Residues histidine 387 and lysine 515 contribute to the active site.

This sequence belongs to the GPI family.

Its subcellular location is the cytoplasm. The enzyme catalyses alpha-D-glucose 6-phosphate = beta-D-fructose 6-phosphate. Its pathway is carbohydrate biosynthesis; gluconeogenesis. It functions in the pathway carbohydrate degradation; glycolysis; D-glyceraldehyde 3-phosphate and glycerone phosphate from D-glucose: step 2/4. In terms of biological role, catalyzes the reversible isomerization of glucose-6-phosphate to fructose-6-phosphate. This chain is Glucose-6-phosphate isomerase, found in Pasteurella multocida (strain Pm70).